Here is a 327-residue protein sequence, read N- to C-terminus: Undecaprenyl-phosphate 4-deoxy-4-formamido-L-arabinose transferase (327 aa).

A run of 2 helical transmembrane segments spans residues 233–253 and 268–288; these read ILSLIGSVVALSGFLLALLLI and VFTLFAVLFMFIGAQFVGMGL.

Belongs to the glycosyltransferase 2 family.

The protein resides in the cell inner membrane. The enzyme catalyses UDP-4-deoxy-4-formamido-beta-L-arabinose + di-trans,octa-cis-undecaprenyl phosphate = 4-deoxy-4-formamido-alpha-L-arabinopyranosyl di-trans,octa-cis-undecaprenyl phosphate + UDP. It functions in the pathway glycolipid biosynthesis; 4-amino-4-deoxy-alpha-L-arabinose undecaprenyl phosphate biosynthesis; 4-amino-4-deoxy-alpha-L-arabinose undecaprenyl phosphate from UDP-4-deoxy-4-formamido-beta-L-arabinose and undecaprenyl phosphate: step 1/2. It participates in bacterial outer membrane biogenesis; lipopolysaccharide biosynthesis. In terms of biological role, catalyzes the transfer of 4-deoxy-4-formamido-L-arabinose from UDP to undecaprenyl phosphate. The modified arabinose is attached to lipid A and is required for resistance to polymyxin and cationic antimicrobial peptides. In Pectobacterium atrosepticum (strain SCRI 1043 / ATCC BAA-672) (Erwinia carotovora subsp. atroseptica), this protein is Undecaprenyl-phosphate 4-deoxy-4-formamido-L-arabinose transferase.